The primary structure comprises 101 residues: MIPGELLIDDGEHELNAGRATVTVVVSNTGDRPVQIGSHYHFYEVNDALAFDRAAARGFRLNIAAGTAVRFEPGQERTVELVELAGDRIVYGFNGKVMGKL.

It belongs to the urease beta subunit family. In terms of assembly, heterotrimer of UreA (gamma), UreB (beta) and UreC (alpha) subunits. Three heterotrimers associate to form the active enzyme.

Its subcellular location is the cytoplasm. It carries out the reaction urea + 2 H2O + H(+) = hydrogencarbonate + 2 NH4(+). It functions in the pathway nitrogen metabolism; urea degradation; CO(2) and NH(3) from urea (urease route): step 1/1. In Paraburkholderia xenovorans (strain LB400), this protein is Urease subunit beta.